The following is a 381-amino-acid chain: Creatine kinase B-type (381 aa).

Serine 4 carries the post-translational modification Phosphoserine. Residues 11-98 enclose the Phosphagen kinase N-terminal domain; it reads KLRFPAEDEF…FDPIIEDRHG (88 aa). Threonine 35 is subject to Phosphothreonine. A Glycyl lysine isopeptide (Lys-Gly) (interchain with G-Cter in ubiquitin) cross-link involves residue lysine 45. Residue valine 72 coordinates creatine. Residues 96-110 are compositionally biased toward basic and acidic residues; that stretch reads RHGGYQPSDEHKTDL. The interval 96–122 is disordered; the sequence is RHGGYQPSDEHKTDLNPDNLQGGDDLD. A Glycyl lysine isopeptide (Lys-Gly) (interchain with G-Cter in ubiquitin) cross-link involves residue lysine 107. Tyrosine 125 carries the post-translational modification Phosphotyrosine. Residues 125 to 367 form the Phosphagen kinase C-terminal domain; the sequence is YVLSSRVRTG…KLLIEMEQRL (243 aa). Residues 128 to 132, arginine 130, arginine 132, and histidine 191 contribute to the ATP site; that span reads SSRVR. The internal MTS-like signal stretch occupies residues 130-138; it reads RVRTGRSIR. Phosphoserine is present on serine 199. Residue glutamate 232 participates in creatine binding. Arginine 236 is an ATP binding site. Tyrosine 269 bears the 3'-nitrotyrosine mark. Serine 285 lines the creatine pocket. Position 292 (arginine 292) interacts with ATP. Residue serine 309 is modified to Phosphoserine. ATP contacts are provided by residues arginine 320, 320–325, and aspartate 335; that span reads RGTGGV. Residue threonine 322 is modified to Phosphothreonine. Lysine 381 is covalently cross-linked (Glycyl lysine isopeptide (Lys-Gly) (interchain with G-Cter in ubiquitin)).

It belongs to the ATP:guanido phosphotransferase family. Dimer of identical or non-identical chains, which can be either B (brain type) or M (muscle type). With MM being the major form in skeletal muscle and myocardium, MB existing in myocardium, and BB existing in many tissues, especially brain. Interacts with SLC12A6 (via C-terminus); the interaction may be required for SLC12A6 potassium-chloride cotransport activity. Post-translationally, ubiquitinated by the ECS(ASB9) complex, leading to its degradation by the proteasome. In the kidney localized primarily in the outer medulla in the thick ascending limb and distal convoluted tubule.

The protein localises to the cytoplasm. It localises to the cytosol. Its subcellular location is the mitochondrion. It is found in the cell membrane. It carries out the reaction creatine + ATP = N-phosphocreatine + ADP + H(+). Its function is as follows. Reversibly catalyzes the transfer of phosphate between ATP and various phosphogens (e.g. creatine phosphate). Creatine kinase isoenzymes play a central role in energy transduction in tissues with large, fluctuating energy demands, such as skeletal muscle, heart, brain and spermatozoa. Acts as a key regulator of adaptive thermogenesis as part of the futile creatine cycle: localizes to the mitochondria of thermogenic fat cells and acts by mediating phosphorylation of creatine to initiate a futile cycle of creatine phosphorylation and dephosphorylation. During the futile creatine cycle, creatine and N-phosphocreatine are in a futile cycle, which dissipates the high energy charge of N-phosphocreatine as heat without performing any mechanical or chemical work. In Rattus norvegicus (Rat), this protein is Creatine kinase B-type (Ckb).